A 259-amino-acid polypeptide reads, in one-letter code: Ribosomal RNA small subunit methyltransferase A (259 aa).

S-adenosyl-L-methionine-binding residues include N13, L15, G40, E61, D85, and N103.

It belongs to the class I-like SAM-binding methyltransferase superfamily. rRNA adenine N(6)-methyltransferase family. RsmA subfamily.

The protein resides in the cytoplasm. The enzyme catalyses adenosine(1518)/adenosine(1519) in 16S rRNA + 4 S-adenosyl-L-methionine = N(6)-dimethyladenosine(1518)/N(6)-dimethyladenosine(1519) in 16S rRNA + 4 S-adenosyl-L-homocysteine + 4 H(+). Its function is as follows. Specifically dimethylates two adjacent adenosines (A1518 and A1519) in the loop of a conserved hairpin near the 3'-end of 16S rRNA in the 30S particle. May play a critical role in biogenesis of 30S subunits. This chain is Ribosomal RNA small subunit methyltransferase A, found in Neisseria meningitidis serogroup A / serotype 4A (strain DSM 15465 / Z2491).